The following is a 332-amino-acid chain: HPr kinase/phosphorylase (332 aa).

Residues His153 and Lys174 contribute to the active site. Residue 168–175 (GKSGLGKS) participates in ATP binding. Ser175 contacts Mg(2+). The active-site Proton acceptor; for phosphorylation activity. Proton donor; for dephosphorylation activity is the Asp192. Positions 217–226 (MEIRGLGVVD) are important for the catalytic mechanism of both phosphorylation and dephosphorylation. Mg(2+) is bound at residue Glu218. Arg259 is a catalytic residue. Residues 280 to 285 (PIFPGK) form an important for the catalytic mechanism of dephosphorylation region.

Belongs to the HPrK/P family. In terms of assembly, homohexamer. Mg(2+) is required as a cofactor.

It catalyses the reaction [HPr protein]-L-serine + ATP = [HPr protein]-O-phospho-L-serine + ADP + H(+). The enzyme catalyses [HPr protein]-O-phospho-L-serine + phosphate + H(+) = [HPr protein]-L-serine + diphosphate. Its function is as follows. Catalyzes the ATP- as well as the pyrophosphate-dependent phosphorylation of a specific serine residue in HPr, a phosphocarrier protein of the phosphoenolpyruvate-dependent sugar phosphotransferase system (PTS). HprK/P also catalyzes the pyrophosphate-producing, inorganic phosphate-dependent dephosphorylation (phosphorolysis) of seryl-phosphorylated HPr (P-Ser-HPr). The polypeptide is HPr kinase/phosphorylase (Chlorobium phaeovibrioides (strain DSM 265 / 1930) (Prosthecochloris vibrioformis (strain DSM 265))).